Reading from the N-terminus, the 188-residue chain is dCTP deaminase (188 aa).

Residues 111 to 116 (KSTYAR), 135 to 137 (TLE), Gln156, Tyr170, and Gln180 each bind dCTP. The active-site Proton donor/acceptor is the Glu137.

The protein belongs to the dCTP deaminase family. As to quaternary structure, homotrimer.

The enzyme catalyses dCTP + H2O + H(+) = dUTP + NH4(+). It functions in the pathway pyrimidine metabolism; dUMP biosynthesis; dUMP from dCTP (dUTP route): step 1/2. Its function is as follows. Catalyzes the deamination of dCTP to dUTP. The polypeptide is dCTP deaminase (Cupriavidus necator (strain ATCC 17699 / DSM 428 / KCTC 22496 / NCIMB 10442 / H16 / Stanier 337) (Ralstonia eutropha)).